We begin with the raw amino-acid sequence, 426 residues long: Enolase (426 aa).

Position 163 (Gln-163) interacts with (2R)-2-phosphoglycerate. Glu-205 acts as the Proton donor in catalysis. Positions 242, 286, and 313 each coordinate Mg(2+). Positions 338, 367, 368, and 389 each coordinate (2R)-2-phosphoglycerate. The active-site Proton acceptor is the Lys-338.

The protein belongs to the enolase family. The cofactor is Mg(2+).

It is found in the cytoplasm. The protein resides in the secreted. The protein localises to the cell surface. It catalyses the reaction (2R)-2-phosphoglycerate = phosphoenolpyruvate + H2O. It participates in carbohydrate degradation; glycolysis; pyruvate from D-glyceraldehyde 3-phosphate: step 4/5. Catalyzes the reversible conversion of 2-phosphoglycerate (2-PG) into phosphoenolpyruvate (PEP). It is essential for the degradation of carbohydrates via glycolysis. In Helicobacter acinonychis (strain Sheeba), this protein is Enolase.